The following is a 442-amino-acid chain: Chaperone protein dnaJ A6, chloroplastic (442 aa).

The transit peptide at methionine 1–arginine 82 directs the protein to the chloroplast. A J domain is found at aspartate 86–glycine 150. The CR-type zinc-finger motif lies at glycine 211–threonine 292. Cysteine 224, cysteine 227, cysteine 241, cysteine 244, cysteine 267, cysteine 270, cysteine 280, and cysteine 283 together coordinate Zn(2+). CXXCXGXG motif repeat units follow at residues cysteine 224–glycine 231, cysteine 241–glycine 248, cysteine 267–glycine 274, and cysteine 280–glycine 287.

This sequence belongs to the DnaJ family.

It localises to the plastid. The protein resides in the chloroplast. May function together with HSC70 chaperone to assist protein folding and prevent protein aggregation during heat stress in the chloroplast. This Arabidopsis thaliana (Mouse-ear cress) protein is Chaperone protein dnaJ A6, chloroplastic.